The chain runs to 196 residues: Large ribosomal subunit protein bL9 (196 aa).

Belongs to the bacterial ribosomal protein bL9 family.

Binds to the 23S rRNA. The polypeptide is Large ribosomal subunit protein bL9 (Bradyrhizobium sp. (strain ORS 278)).